Here is a 706-residue protein sequence, read N- to C-terminus: Probable E3 ubiquitin ligase complex SCF subunit sconB (706 aa).

Positions 1 to 12 (MQSDDRSVREGS) are enriched in basic and acidic residues. 2 disordered regions span residues 1–43 (MQSD…LLQQ) and 56–76 (TAEE…SFGA). The span at 34–43 (QQQQQQLLQQ) shows a compositional bias: low complexity. An F-box domain is found at 203–249 (IDFLTALPPEISFKILCYLDTTSLCKAAQVSSRWRALADDDVVWHRM). WD repeat units lie at residues 377–414 (GHTN…ELRT), 417–456 (GHQS…STYT), 458–494 (HRGG…TFLL), 496–537 (GHTD…RTFH), 589–632 (ATET…CLRT), 635–672 (GHLE…CERT), and 675–706 (GHSG…SFRN).

It belongs to the WD repeat MET30/SCONB/SCON-2 family. In terms of assembly, component of the SCF(sconB) E3 ubiquitin ligase complex.

Its pathway is protein modification; protein ubiquitination. Component of the SCF(sconB) E3 ubiquitin ligase complex involved in the regulation of sulfur metabolite repression, probably by mediating the inactivation or degradation of the metR transcription factor. The protein is Probable E3 ubiquitin ligase complex SCF subunit sconB (sconB) of Aspergillus flavus (strain ATCC 200026 / FGSC A1120 / IAM 13836 / NRRL 3357 / JCM 12722 / SRRC 167).